The primary structure comprises 463 residues: NADH-quinone oxidoreductase subunit N (463 aa).

14 consecutive transmembrane segments (helical) span residues 2-22 (NTLI…ILNF), 25-45 (GIVP…FYEF), 61-81 (FSTA…ALSH), 91-110 (ISDF…AMVS), 114-133 (LAMF…VLAA), 149-169 (FLMG…IYGA), 189-209 (IWFP…IAAV), 223-243 (PALT…ATLF), 264-284 (FTNV…IMAL), 292-312 (MLAF…LTIA), 317-337 (VLLY…SVIL), 362-382 (AAIL…SGFF), 395-415 (GYVA…GYYF), and 434-454 (PFLI…LGLF).

Belongs to the complex I subunit 2 family. NDH-1 is composed of 14 different subunits. Subunits NuoA, H, J, K, L, M, N constitute the membrane sector of the complex.

Its subcellular location is the cell inner membrane. The catalysed reaction is a quinone + NADH + 5 H(+)(in) = a quinol + NAD(+) + 4 H(+)(out). NDH-1 shuttles electrons from NADH, via FMN and iron-sulfur (Fe-S) centers, to quinones in the respiratory chain. The immediate electron acceptor for the enzyme in this species is believed to be a menaquinone. Couples the redox reaction to proton translocation (for every two electrons transferred, four hydrogen ions are translocated across the cytoplasmic membrane), and thus conserves the redox energy in a proton gradient. The sequence is that of NADH-quinone oxidoreductase subunit N from Flavobacterium johnsoniae (strain ATCC 17061 / DSM 2064 / JCM 8514 / BCRC 14874 / CCUG 350202 / NBRC 14942 / NCIMB 11054 / UW101) (Cytophaga johnsonae).